The sequence spans 431 residues: 3-phosphoshikimate 1-carboxyvinyltransferase (431 aa).

3 residues coordinate 3-phosphoshikimate: Lys22, Ser23, and Arg27. Lys22 serves as a coordination point for phosphoenolpyruvate. Positions 94 and 122 each coordinate phosphoenolpyruvate. 3-phosphoshikimate is bound by residues Ser168, Ser169, Gln170, Ser196, Asp315, and Lys342. Phosphoenolpyruvate is bound at residue Gln170. The active-site Proton acceptor is the Asp315. Arg346, Arg390, and Lys414 together coordinate phosphoenolpyruvate.

The protein belongs to the EPSP synthase family. Monomer.

The protein resides in the cytoplasm. The catalysed reaction is 3-phosphoshikimate + phosphoenolpyruvate = 5-O-(1-carboxyvinyl)-3-phosphoshikimate + phosphate. It functions in the pathway metabolic intermediate biosynthesis; chorismate biosynthesis; chorismate from D-erythrose 4-phosphate and phosphoenolpyruvate: step 6/7. Its function is as follows. Catalyzes the transfer of the enolpyruvyl moiety of phosphoenolpyruvate (PEP) to the 5-hydroxyl of shikimate-3-phosphate (S3P) to produce enolpyruvyl shikimate-3-phosphate and inorganic phosphate. The protein is 3-phosphoshikimate 1-carboxyvinyltransferase of Nitrosomonas europaea (strain ATCC 19718 / CIP 103999 / KCTC 2705 / NBRC 14298).